Consider the following 451-residue polypeptide: Trigger factor (451 aa).

The 86-residue stretch at 163–248 (GDIIDMEYTV…IKALYANILP (86 aa)) folds into the PPIase FKBP-type domain.

This sequence belongs to the FKBP-type PPIase family. Tig subfamily.

The protein localises to the cytoplasm. It carries out the reaction [protein]-peptidylproline (omega=180) = [protein]-peptidylproline (omega=0). Its function is as follows. Involved in protein export. Acts as a chaperone by maintaining the newly synthesized protein in an open conformation. Functions as a peptidyl-prolyl cis-trans isomerase. This Leptospira interrogans serogroup Icterohaemorrhagiae serovar copenhageni (strain Fiocruz L1-130) protein is Trigger factor.